The following is an 84-amino-acid chain: Small ribosomal subunit protein bS16 (84 aa).

The protein belongs to the bacterial ribosomal protein bS16 family.

The polypeptide is Small ribosomal subunit protein bS16 (Paraburkholderia phymatum (strain DSM 17167 / CIP 108236 / LMG 21445 / STM815) (Burkholderia phymatum)).